We begin with the raw amino-acid sequence, 520 residues long: Transactivator/viroplasmin protein (520 aa).

The segment at 486–520 is disordered; that stretch reads VQDASADSGPKDGPPPTRSIVEKEDVPTTSSKQVD.

It belongs to the caulimoviridae viroplasmin family.

It localises to the host cytoplasm. In terms of biological role, enhances the ribosomal termination-reinitiation event leading to the translation of major open reading frames on the polycistronic viral RNAs. This chain is Transactivator/viroplasmin protein, found in Cauliflower mosaic virus (strain NY8153) (CaMV).